The sequence spans 101 residues: Gamma-secretase subunit PEN-2 (101 aa).

Residues 1–17 lie on the Cytoplasmic side of the membrane; sequence MNLERVSNEEKLNLCRK. Positions 18 to 36 form an intramembrane region, helical; it reads YYLGGFAFLPFLWLVNIFW. Residues 37-57 are Cytoplasmic-facing; that stretch reads FFREAFIVPAYTEQSQIKGYV. Residues 58–78 traverse the membrane as a helical segment; sequence WRSAVGFFLWVIVLSTWITIF. The Lumenal segment spans residues 79–101; that stretch reads QIYRPRWGALGDYLSFTIPLGTP.

It belongs to the PEN-2 family. The functional gamma-secretase complex is composed of at least four polypeptides: a presenilin homodimer (PSEN1 or PSEN2), nicastrin (NCSTN), APH1 (APH1A or APH1B) and PSENEN.

It localises to the endoplasmic reticulum membrane. Its subcellular location is the golgi apparatus. The protein localises to the golgi stack membrane. The protein resides in the cell membrane. It is found in the membrane. In terms of biological role, essential subunit of the gamma-secretase complex, an endoprotease complex that catalyzes the intramembrane cleavage of integral membrane proteins such as Notch receptors and APP (amyloid-beta precursor protein). The gamma-secretase complex plays a role in Notch and Wnt signaling cascades and regulation of downstream processes via its role in processing key regulatory proteins, and by regulating cytosolic CTNNB1 levels. PSENEN modulates both endoproteolysis of presenilin and gamma-secretase activity. This chain is Gamma-secretase subunit PEN-2 (PSENEN), found in Bos taurus (Bovine).